A 128-amino-acid polypeptide reads, in one-letter code: Azurin (128 aa).

Positions 1 to 128 (AECKVTVDST…AMMKGTVTLK (128 aa)) constitute a Plastocyanin-like domain. The cysteines at positions 3 and 26 are disulfide-linked. Residues His-46, Cys-112, His-117, and Met-121 each contribute to the Cu cation site.

It localises to the periplasm. Its function is as follows. Transfers electrons from cytochrome c551 to cytochrome oxidase. The chain is Azurin from Pseudomonas fluorescens biotype C.